The sequence spans 1765 residues: Sodium channel protein type 11 subunit alpha (1765 aa).

Residues 1 to 126 are Cytoplasmic-facing; the sequence is MEERYYPVIF…PIRSFMIRIS (126 aa). Residues 115–406 form an I repeat; the sequence is FNPIRSFMIR…VTMAYEEQNR (292 aa). A helical membrane pass occupies residues 127 to 148; the sequence is VHSVFSMFIICTVIINCMFMAN. N-linked (GlcNAc...) asparagine glycosylation occurs at N149. The Extracellular portion of the chain corresponds to 149–159; the sequence is NSSVDSRPSSN. The chain crosses the membrane as a helical span at residues 160-179; that stretch reads IPEYVFIGIYVLEAVIKILA. The Cytoplasmic segment spans residues 180 to 191; the sequence is RGFIVDEFSYLR. The helical transmembrane segment at 192–211 threads the bilayer; that stretch reads DPWNWLDFIVIGTAIAPCFL. Residues 212–219 lie on the Extracellular side of the membrane; sequence GNKVNNLS. N-linked (GlcNAc...) asparagine glycosylation occurs at N217. A helical; Voltage-sensor membrane pass occupies residues 220 to 239; the sequence is TLRTFRVLRALKAISVISGL. The Cytoplasmic segment spans residues 240–255; that stretch reads KVIVGALLRSVKKLVD. A helical transmembrane segment spans residues 256–269; that stretch reads VMVLTLFCLSIFAL. Topologically, residues 270–342 are extracellular; the sequence is VGQQLFMGIL…PDYNYTNFDS (73 aa). A disulfide bond links C283 and C320. N303, N327, and N336 each carry an N-linked (GlcNAc...) asparagine glycan. The pore-forming intramembrane region spans 343 to 367; that stretch reads FGWSFLAMFRVMTQDSWEKLYRQIL. Over 368-374 the chain is Extracellular; the sequence is RTSGIYF. Residues 375-400 traverse the membrane as a helical segment; that stretch reads VFFFVVVIFLGSFYLLNLTLAVVTMA. The Cytoplasmic portion of the chain corresponds to 401 to 570; the sequence is YEEQNRNVAA…WLCIKKVLQT (170 aa). The tract at residues 470-490 is disordered; that stretch reads RGSKTARASASDSEDDASKNP. One copy of the II repeat lies at 557–821; sequence CSPPWLCIKK…EGETRKTKVQ (265 aa). The helical transmembrane segment at 571 to 594 threads the bilayer; that stretch reads IMTDPFTELAITICIIVNTVFLAM. Residues 595-605 lie on the Extracellular side of the membrane; sequence EHHNMDNSLKD. Residues 606-629 form a helical membrane-spanning segment; the sequence is ILKIGNWVFTGIFIAEMCLKIIAL. The Cytoplasmic segment spans residues 630–637; sequence DPYHYFRH. The helical transmembrane segment at 638-659 threads the bilayer; sequence GWNIFDSIVALVSLADVLFHKL. The Extracellular segment spans residues 660-664; the sequence is SKNLS. The N-linked (GlcNAc...) asparagine glycan is linked to N662. Residues 665–684 form a helical; Voltage-sensor membrane-spanning segment; the sequence is FLASLRVLRVFKLAKSWPTL. At 685-699 the chain is on the cytoplasmic side; the sequence is NTLIKIIGHSVGALG. The helical transmembrane segment at 700–722 threads the bilayer; that stretch reads NLTVVLTIVVFIFSVVGMRLFGA. The Extracellular portion of the chain corresponds to 723-742; the sequence is KFNKTCSTSPESLRRWHMGD. N-linked (GlcNAc...) asparagine glycosylation occurs at N725. The segment at residues 743–763 is an intramembrane region (pore-forming); sequence FYHSFLVVFRILCGEWIENMW. Over 764–773 the chain is Extracellular; that stretch reads ECMQEMEGSP. The cysteines at positions 765 and 775 are disulfide-linked. A helical transmembrane segment spans residues 774–799; the sequence is LCVIVFVLIMVVGKLVVLNLFIALLL. The Cytoplasmic segment spans residues 800-1030; that stretch reads NSFSNEEKDG…WWNLRKTCYQ (231 aa). The interval 850–869 is disordered; it reads NSPKPNEATESFAGESRDTA. One copy of the III repeat lies at 1023–1320; it reads NLRKTCYQIV…KKYYNAMKKL (298 aa). The chain crosses the membrane as a helical span at residues 1031–1053; that stretch reads IVKHSWFESFIIFVILLSSGALI. Residues 1054 to 1067 lie on the Extracellular side of the membrane; that stretch reads FEDVNLPSRPQVEK. The chain crosses the membrane as a helical span at residues 1068 to 1093; the sequence is LLKCTDNIFTFIFLLEMILKWVAFGF. Residues 1094-1099 are Cytoplasmic-facing; sequence RKYFTS. Residues 1100-1117 traverse the membrane as a helical segment; that stretch reads AWCWLDFLIVVVSGLSLT. A topological domain (extracellular) is located at residue N1118. The chain crosses the membrane as a helical; Voltage-sensor span at residues 1119–1140; sequence LPNLKSFRNLRALRPLRALSQF. Topologically, residues 1141–1159 are cytoplasmic; that stretch reads EGMKVVVNALMSAIPAILN. Residues 1160–1181 traverse the membrane as a helical segment; that stretch reads VLLVCLIFWLIFCILGVNFFSG. Over 1182–1224 the chain is Extracellular; the sequence is KFGRCINGTDINKYFNASNVPNQSQCLVSNYTWKVPNVNFDNV. 4 N-linked (GlcNAc...) asparagine glycosylation sites follow: N1188, N1197, N1203, and N1211. Residues 1225-1246 constitute an intramembrane region (pore-forming); that stretch reads GNAYLALLQVATYKGWLDIMNA. The Extracellular portion of the chain corresponds to 1247–1262; the sequence is AVDSRGKDEQPAFEAN. Residues 1263–1289 form a helical membrane-spanning segment; sequence LYAYLYFVVFIIFGSFFTLNLFIGVII. Residues 1290–1342 are Cytoplasmic-facing; sequence DNFNQQQKKLGGQDIFMTEEQKKYYNAMKKLGTKKPQKPIPRPLNKCQAFVFD. One copy of the IV repeat lies at 1329–1619; the sequence is IPRPLNKCQA…WEKFDPEATQ (291 aa). A helical transmembrane segment spans residues 1343 to 1366; the sequence is LVTSQVFDVIILGLIVTNMIIMMA. The Extracellular segment spans residues 1367–1377; the sequence is ESEGQPNEVKK. Residues 1378–1401 traverse the membrane as a helical segment; that stretch reads IFDILNIVFVVIFTVECLIKVFAL. Over 1402–1407 the chain is Cytoplasmic; that stretch reads RQHYFT. Residues 1408–1431 form a helical membrane-spanning segment; sequence NGWNLFDCVVVVLSIISTLVSGLE. The Extracellular portion of the chain corresponds to 1432-1440; it reads NSNVFPPTL. The chain crosses the membrane as a helical; Voltage-sensor span at residues 1441-1463; it reads FRIVRLARIGRILRLVRAARGIR. At 1464–1478 the chain is on the cytoplasmic side; that stretch reads TLLFALMMSLPSLFN. The chain crosses the membrane as a helical span at residues 1479–1501; sequence IGLLLFLVMFIYAIFGMNWFSKV. Over 1502–1515 the chain is Extracellular; the sequence is KRGSGIDDIFNFDT. An intramembrane region (pore-forming) is located at residues 1516 to 1538; it reads FSGSMLCLFQITTSAGWDALLNP. Topologically, residues 1539-1559 are extracellular; that stretch reads MLESKASCNSSSQESCQQPQI. The helical transmembrane segment at 1560-1584 threads the bilayer; sequence AIVYFVSYIIISFLIVVNMYIAVIL. At 1585 to 1765 the chain is on the cytoplasmic side; that stretch reads ENFNTATEES…DVPKIKVHCD (181 aa).

This sequence belongs to the sodium channel (TC 1.A.1.10) family. Nav1.9/SCN11A subfamily. As to quaternary structure, the voltage-resistant sodium channel consists of an ion conducting pore forming alpha-subunit regulated by one or more auxiliary subunits SCN1B, SCN2B and SCN3B. In terms of tissue distribution, expressed in the dorsal root ganglia (C-fiber neurons), spinal cord, trigeminal ganglia, testis, ovary, uterus and small intestine.

It localises to the cell membrane. The catalysed reaction is Na(+)(in) = Na(+)(out). Its function is as follows. Sodium channel mediating the voltage-dependent sodium ion permeability of excitable membranes. Assuming opened or closed conformations in response to the voltage difference across the membrane, the protein forms a sodium-selective channel through which sodium ions may pass in accordance with their electrochemical gradient. Involved in membrane depolarization during action potential in nociceptors which function as key relay stations for the electrical transmission of pain signals from the periphery to the central nervous system. Also involved in rapid BDNF-evoked neuronal depolarization. This chain is Sodium channel protein type 11 subunit alpha, found in Mus musculus (Mouse).